The primary structure comprises 234 residues: Fibroblast growth factor-binding protein 1 (234 aa).

Positions 1–23 (MRTHGLTLLSLLLLAVPMLLVEA) are cleaved as a signal peptide. The disordered stretch occupies residues 25-59 (KEGRNRRGSKASADESLALGKPGKEPRSQPTNYPI). 3 disulfides stabilise this stretch: cysteine 71-cysteine 88, cysteine 97-cysteine 130, and cysteine 106-cysteine 142. Asparagine 155 is a glycosylation site (N-linked (GlcNAc...) asparagine). Positions 169 to 200 (MEPSPMDTVEVTTSSSPEKTQTMATKDPQCEE) are disordered. Serine 172 is a glycosylation site (O-linked (GalNAc...) serine). The span at 178 to 192 (EVTTSSSPEKTQTMA) shows a compositional bias: polar residues. A sufficient for interaction with FGF2 and FGF2-induced effects region spans residues 194–234 (KDPQCEEEDLKNQRKAALEYCGETWGSLCNFFLSMVQGSSC). 2 disulfide bridges follow: cysteine 198–cysteine 234 and cysteine 214–cysteine 222.

This sequence belongs to the fibroblast growth factor-binding protein family. In terms of assembly, found in a complex with FGFBP1, FGF1 and FGF2. Interacts with FGF1, FGF7, FGF10, FGF22 and HSPG2. Interacts with FGF2.

Its subcellular location is the secreted. The protein resides in the extracellular space. It localises to the cell membrane. Functionally, acts as a carrier protein that release fibroblast-binding factors (FGFs) from the extracellular matrix (EM) storage and thus enhance the mitogenic activity of FGFs. Enhances FGF2 signaling during tissue repair, angiogenesis and in tumor growth. The polypeptide is Fibroblast growth factor-binding protein 1 (FGFBP1) (Bos taurus (Bovine)).